Reading from the N-terminus, the 54-residue chain is ATP synthase protein 8 (54 aa).

A helical membrane pass occupies residues 13–32 (ITFTFVIITLMVYILSKYIL).

The protein belongs to the ATPase protein 8 family. F-type ATPases have 2 components, CF(1) - the catalytic core - and CF(0) - the membrane proton channel.

It localises to the mitochondrion membrane. In terms of biological role, mitochondrial membrane ATP synthase (F(1)F(0) ATP synthase or Complex V) produces ATP from ADP in the presence of a proton gradient across the membrane which is generated by electron transport complexes of the respiratory chain. F-type ATPases consist of two structural domains, F(1) - containing the extramembraneous catalytic core and F(0) - containing the membrane proton channel, linked together by a central stalk and a peripheral stalk. During catalysis, ATP synthesis in the catalytic domain of F(1) is coupled via a rotary mechanism of the central stalk subunits to proton translocation. Part of the complex F(0) domain. Minor subunit located with subunit a in the membrane. This Neurospora crassa (strain ATCC 24698 / 74-OR23-1A / CBS 708.71 / DSM 1257 / FGSC 987) protein is ATP synthase protein 8 (atp-8).